The following is a 432-amino-acid chain: Adenylosuccinate synthetase (432 aa).

GTP is bound by residues 13–19 and 41–43; these read GDEGKGK and GHT. Aspartate 14 functions as the Proton acceptor in the catalytic mechanism. Mg(2+) is bound by residues aspartate 14 and glycine 41. Residues 14 to 17, 39 to 42, threonine 130, arginine 144, glutamine 225, threonine 240, and arginine 304 each bind IMP; these read DEGK and NAGH. Residue histidine 42 is the Proton donor of the active site. Position 300-306 (300-306) interacts with substrate; it reads ATTGRRR. GTP contacts are provided by residues arginine 306, 332–334, and 415–417; these read KLD and STG.

It belongs to the adenylosuccinate synthetase family. In terms of assembly, homodimer. It depends on Mg(2+) as a cofactor.

The protein localises to the cytoplasm. The enzyme catalyses IMP + L-aspartate + GTP = N(6)-(1,2-dicarboxyethyl)-AMP + GDP + phosphate + 2 H(+). It participates in purine metabolism; AMP biosynthesis via de novo pathway; AMP from IMP: step 1/2. Functionally, plays an important role in the de novo pathway of purine nucleotide biosynthesis. Catalyzes the first committed step in the biosynthesis of AMP from IMP. In Salmonella paratyphi C (strain RKS4594), this protein is Adenylosuccinate synthetase.